The primary structure comprises 894 residues: Alanine--tRNA ligase (894 aa).

This sequence belongs to the class-II aminoacyl-tRNA synthetase family.

The protein localises to the cytoplasm. It carries out the reaction tRNA(Ala) + L-alanine + ATP = L-alanyl-tRNA(Ala) + AMP + diphosphate. In terms of biological role, catalyzes the attachment of alanine to tRNA(Ala) in a two-step reaction: alanine is first activated by ATP to form Ala-AMP and then transferred to the acceptor end of tRNA(Ala). Also edits incorrectly charged Ser-tRNA(Ala) and Gly-tRNA(Ala) via its editing domain. The chain is Alanine--tRNA ligase (alaS) from Leuconostoc citreum (strain KM20).